The primary structure comprises 105 residues: Cortistatin (105 aa).

A signal peptide spans M1–T18. A propeptide spanning residues A19–A74 is cleaved from the precursor. Residues C93 and C104 are joined by a disulfide bond.

Belongs to the somatostatin family. In terms of tissue distribution, expressed in a subset of GABAergic cells in the cortex and hippocampus.

Its subcellular location is the secreted. Binds to all human somatostatin receptor (SSTR) subtypes. It also inhibits cAMP production induced by forskolin through SSTRs. This is Cortistatin (CORT) from Homo sapiens (Human).